Consider the following 356-residue polypeptide: Probable arabinogalactan endo-beta-1,4-galactanase A (356 aa).

Positions 1–21 (MLGKMILLPLFVLLCHSLASA) are cleaved as a signal peptide. A glycan (N-linked (GlcNAc...) asparagine) is linked at N133. E157 acts as the Proton donor in catalysis. E268 functions as the Nucleophile in the catalytic mechanism.

This sequence belongs to the glycosyl hydrolase 53 family.

Its subcellular location is the secreted. The catalysed reaction is The enzyme specifically hydrolyzes (1-&gt;4)-beta-D-galactosidic linkages in type I arabinogalactans.. Endogalactanase involved in the degradation of plant cell wall polysaccharides, and more particularly of hairy regions of pectin. In Neosartorya fischeri (strain ATCC 1020 / DSM 3700 / CBS 544.65 / FGSC A1164 / JCM 1740 / NRRL 181 / WB 181) (Aspergillus fischerianus), this protein is Probable arabinogalactan endo-beta-1,4-galactanase A (galA).